The chain runs to 120 residues: Protein Wnt-9 (120 aa).

Ser-1 carries the O-palmitoleoyl serine; by PORCN lipid modification. Residues Cys-90 and Cys-101 are joined by a disulfide bond.

This sequence belongs to the Wnt family. Palmitoleoylation is required for efficient binding to frizzled receptors. Depalmitoleoylation leads to Wnt signaling pathway inhibition.

Its subcellular location is the secreted. It is found in the extracellular space. It localises to the extracellular matrix. In terms of biological role, ligand for members of the frizzled family of seven transmembrane receptors. Probable developmental protein. May be a signaling molecule which affects the development of discrete regions of tissues. Is likely to signal over only few cell diameters. The protein is Protein Wnt-9 (WNT-9) of Alopias vulpinus (Common thresher shark).